A 410-amino-acid chain; its full sequence is LL-diaminopimelate aminotransferase (410 aa).

Substrate is bound by residues Y15 and G42. Pyridoxal 5'-phosphate contacts are provided by residues Y72, 108–109 (SK), Y132, N187, Y218, and 246–248 (SFS). Substrate is bound by residues K109, Y132, and N187. K249 bears the N6-(pyridoxal phosphate)lysine mark. Positions 257 and 292 each coordinate pyridoxal 5'-phosphate. Substrate contacts are provided by N292 and R388.

It belongs to the class-I pyridoxal-phosphate-dependent aminotransferase family. LL-diaminopimelate aminotransferase subfamily. Homodimer. Requires pyridoxal 5'-phosphate as cofactor.

It catalyses the reaction (2S,6S)-2,6-diaminopimelate + 2-oxoglutarate = (S)-2,3,4,5-tetrahydrodipicolinate + L-glutamate + H2O + H(+). It participates in amino-acid biosynthesis; L-lysine biosynthesis via DAP pathway; LL-2,6-diaminopimelate from (S)-tetrahydrodipicolinate (aminotransferase route): step 1/1. In terms of biological role, involved in the synthesis of meso-diaminopimelate (m-DAP or DL-DAP), required for both lysine and peptidoglycan biosynthesis. Catalyzes the direct conversion of tetrahydrodipicolinate to LL-diaminopimelate. This is LL-diaminopimelate aminotransferase from Geotalea uraniireducens (strain Rf4) (Geobacter uraniireducens).